We begin with the raw amino-acid sequence, 288 residues long: Probable aquaporin PIP1-2 (288 aa).

Positions 1–37 (MEGKEEDVRLGANKFSERQPIGTAAQGSDDKDYKEPP) are disordered. 2 helical membrane-spanning segments follow: residues 57-77 (IAEF…VMGV) and 92-114 (IAWS…SGGH). Residues 116–118 (NPA) carry the NPA 1 motif. Transmembrane regions (helical) follow at residues 135–155 (LFYM…VKGF), 177–197 (GDGL…VFSA), and 211–231 (ILAP…TIPI). An NPA 2 motif is present at residues 237 to 239 (NPA). The chain crosses the membrane as a helical span at residues 259–279 (IFWVGPFIGAALAAIYHQVVI).

It belongs to the MIP/aquaporin (TC 1.A.8) family. PIP (TC 1.A.8.11) subfamily. As to expression, expressed in roots, leaves and anthers.

Its subcellular location is the cell membrane. In terms of biological role, aquaporins facilitate the transport of water and small neutral solutes across cell membranes. This Oryza sativa subsp. japonica (Rice) protein is Probable aquaporin PIP1-2 (PIP1-2).